The following is a 224-amino-acid chain: Cardosin-E (224 aa).

Positions 1–221 (DSGSAIVALT…DYGNLLVGFA (221 aa)) constitute a Peptidase A1 domain. D35 is an active-site residue. A disulfide bridge links C125 with C129. Residue D134 is part of the active site.

The protein belongs to the peptidase A1 family. As to quaternary structure, heterodimer of a light chain and a heavy chain. An intermediate form is produced first, and undergoes proteolytic processing to remove the internal plant-specific insert (PSI) and the propeptide. N-glycosylated. In terms of tissue distribution, pistils.

It is found in the microsome membrane. The protein resides in the protein storage vacuole. Its subcellular location is the secreted. It localises to the cell wall. The protein localises to the extracellular space. It is found in the extracellular matrix. With respect to regulation, inhibited by pepstatin. Aspartic protease with a high preference for bonds between hydrophobic residues. The protein is Cardosin-E of Cynara cardunculus (Cardoon).